The primary structure comprises 396 residues: Elongation factor Tu (396 aa).

The 196-residue stretch at 10 to 205 folds into the tr-type G domain; that stretch reads KPHVNIGTIG…ACDESIPDPV (196 aa). The interval 19–26 is G1; sequence GHVDHGKT. 19–26 lines the GTP pocket; the sequence is GHVDHGKT. Position 26 (threonine 26) interacts with Mg(2+). Residues 62–66 are G2; sequence GITIN. Residues 83-86 are G3; the sequence is DAPG. GTP is bound by residues 83 to 87 and 138 to 141; these read DAPGH and NKCD. A G4 region spans residues 138 to 141; it reads NKCD. The segment at 175–177 is G5; it reads SAL.

It belongs to the TRAFAC class translation factor GTPase superfamily. Classic translation factor GTPase family. EF-Tu/EF-1A subfamily. As to quaternary structure, monomer.

It is found in the cytoplasm. It carries out the reaction GTP + H2O = GDP + phosphate + H(+). In terms of biological role, GTP hydrolase that promotes the GTP-dependent binding of aminoacyl-tRNA to the A-site of ribosomes during protein biosynthesis. The sequence is that of Elongation factor Tu from Corynebacterium kroppenstedtii (strain DSM 44385 / JCM 11950 / CIP 105744 / CCUG 35717).